Reading from the N-terminus, the 203-residue chain is Protein-methionine-sulfoxide reductase heme-binding subunit MsrQ (203 aa).

5 helical membrane passes run 13-33 (IAIW…INLG), 79-99 (LLGL…SILE), 116-136 (PYLT…LTST), 147-167 (WQKL…HYLW), and 169-189 (VKTL…LLLL).

The protein belongs to the MsrQ family. As to quaternary structure, heterodimer of a catalytic subunit (MsrP) and a heme-binding subunit (MsrQ). The cofactor is FMN. Heme b serves as cofactor.

Its subcellular location is the cell inner membrane. In terms of biological role, part of the MsrPQ system that repairs oxidized periplasmic proteins containing methionine sulfoxide residues (Met-O), using respiratory chain electrons. Thus protects these proteins from oxidative-stress damage caused by reactive species of oxygen and chlorine generated by the host defense mechanisms. MsrPQ is essential for the maintenance of envelope integrity under bleach stress, rescuing a wide series of structurally unrelated periplasmic proteins from methionine oxidation. MsrQ provides electrons for reduction to the reductase catalytic subunit MsrP, using the quinone pool of the respiratory chain. The sequence is that of Protein-methionine-sulfoxide reductase heme-binding subunit MsrQ from Yersinia pseudotuberculosis serotype O:1b (strain IP 31758).